The primary structure comprises 1550 residues: Gag-Pol polyprotein (1550 aa).

Gly2 carries the N-myristoyl glycine; by host lipid modification. An interaction with Gp41 region spans residues 7–31 (VLRGKKADELEKVRLRPGGKKKYRL). Positions 16 to 22 (LEKVRLR) match the Nuclear export signal motif. The Nuclear localization signal motif lies at 26-32 (KKKYRLK). A disordered region spans residues 110–136 (AETGTAEKMPNTSRPTAPPSGKRGNYP). Tyr135 carries the post-translational modification Phosphotyrosine; by host. An interaction with human PPIA/CYPA and NUP153 region spans residues 191–228 (NCVGDHQAAMQIIREIINEEAADWDSQHPIPGPLPAGQ). The segment at 279–365 (YNPTNILDIK…GGPGQKARLM (87 aa)) is dimerization/Multimerization of capsid protein p24. 2 CCHC-type zinc fingers span residues 389-406 (IRYW…QCRA) and 410-427 (QGCW…NCPE). The segment at 437–508 (PTGKEASQLP…ERDTSQRGDR (72 aa)) is disordered. Low complexity predominate over residues 456–469 (TNSTSGRSSSGTVG). Residues 497 to 508 (RAERDTSQRGDR) are compositionally biased toward basic and acidic residues. The interval 513–517 (PQFSL) is dimerization of protease. The Peptidase A2 domain maps to 532-601 (VEVLLDTGAD…TPINIFGRNI (70 aa)). The For protease activity; shared with dimeric partner role is filled by Asp537. Dimerization of protease regions lie at residues 561–567 (GIGGFIN) and 600–612 (NILT…LNLP). The region spanning 655–845 (EGQLEEAPPT…PPFQWMGCEL (191 aa)) is the Reverse transcriptase domain. The Mg(2+) site is built by Asp721, Asp796, and Asp797. The RT 'primer grip' stretch occupies residues 838–846 (FQWMGCELW). Residues 1008-1024 (WEQWWDNYWQVTWIPEW) carry the Tryptophan repeat motif motif. An RNase H type-1 domain is found at 1044-1167 (IPGAETFYTD…VDHLVSQGIR (124 aa)). The Mg(2+) site is built by Asp1053, Glu1088, Asp1108, and Asp1159. The Integrase-type zinc finger occupies 1173–1214 (EKIEPAQEEHEKYHSIIKELTHKFGIPLLVARQIVNSCAQCQ). Residues His1182, His1186, Cys1210, and Cys1213 each coordinate Zn(2+). The Integrase catalytic domain occupies 1223 to 1374 (QVNAEIGVWQ…TPAERLINMI (152 aa)). Mg(2+)-binding residues include Asp1234, Asp1286, and Glu1322. The integrase-type DNA-binding region spans 1393 to 1440 (FQVYYREGRDQLWKGPGELLWKGEGAVIVKVGTDIKVVPRRKAKIIRD).

Homotrimer; further assembles as hexamers of trimers. Interacts with gp41 (via C-terminus). Interacts with host CALM1; this interaction induces a conformational change in the Matrix protein, triggering exposure of the myristate group. Interacts with host AP3D1; this interaction allows the polyprotein trafficking to multivesicular bodies during virus assembly. Part of the pre-integration complex (PIC) which is composed of viral genome, matrix protein, Vpr and integrase. As to quaternary structure, homodimer; the homodimer further multimerizes as homohexamers or homopentamers. Interacts with human PPIA/CYPA. Interacts with human NUP153. Interacts with host PDZD8; this interaction stabilizes the capsid. Interacts with monkey TRIM5; this interaction destabilizes the capsid. In terms of assembly, homodimer, whose active site consists of two apposed aspartic acid residues. Heterodimer of p66 RT and p51 RT (RT p66/p51). Heterodimerization of RT is essential for DNA polymerase activity. The overall folding of the subdomains is similar in p66 RT and p51 RT but the spatial arrangements of the subdomains are dramatically different. As to quaternary structure, homotetramer; may further associate as a homohexadecamer. Part of the pre-integration complex (PIC) which is composed of viral genome, matrix protein, Vpr and integrase. Interacts with human SMARCB1/INI1 and human PSIP1/LEDGF isoform 1. Interacts with human KPNA3; this interaction might play a role in nuclear import of the pre-integration complex. Interacts with human NUP153; this interaction might play a role in nuclear import of the pre-integration complex. It depends on Mg(2+) as a cofactor. Post-translationally, specific enzymatic cleavages by the viral protease yield mature proteins. The protease is released by autocatalytic cleavage. The polyprotein is cleaved during and after budding, this process is termed maturation. Proteolytic cleavage of p66 RT removes the RNase H domain to yield the p51 RT subunit. Nucleocapsid protein p7 might be further cleaved after virus entry.

It localises to the host cell membrane. The protein resides in the host endosome. It is found in the host multivesicular body. The protein localises to the virion membrane. Its subcellular location is the host nucleus. It localises to the host cytoplasm. The protein resides in the virion. It carries out the reaction Endopeptidase for which the P1 residue is preferably hydrophobic.. It catalyses the reaction Endohydrolysis of RNA in RNA/DNA hybrids. Three different cleavage modes: 1. sequence-specific internal cleavage of RNA. Human immunodeficiency virus type 1 and Moloney murine leukemia virus enzymes prefer to cleave the RNA strand one nucleotide away from the RNA-DNA junction. 2. RNA 5'-end directed cleavage 13-19 nucleotides from the RNA end. 3. DNA 3'-end directed cleavage 15-20 nucleotides away from the primer terminus.. The enzyme catalyses 3'-end directed exonucleolytic cleavage of viral RNA-DNA hybrid.. The catalysed reaction is DNA(n) + a 2'-deoxyribonucleoside 5'-triphosphate = DNA(n+1) + diphosphate. With respect to regulation, protease: The viral protease is inhibited by many synthetic protease inhibitors (PIs), such as amprenavir, atazanavir, indinavir, loprinavir, nelfinavir, ritonavir and saquinavir. Use of protease inhibitors in tritherapy regimens permit more ambitious therapeutic strategies. Reverse transcriptase/ribonuclease H: RT can be inhibited either by nucleoside RT inhibitors (NRTIs) or by non nucleoside RT inhibitors (NNRTIs). NRTIs act as chain terminators, whereas NNRTIs inhibit DNA polymerization by binding a small hydrophobic pocket near the RT active site and inducing an allosteric change in this region. Classical NRTIs are abacavir, adefovir (PMEA), didanosine (ddI), lamivudine (3TC), stavudine (d4T), tenofovir (PMPA), zalcitabine (ddC), and zidovudine (AZT). Classical NNRTIs are atevirdine (BHAP U-87201E), delavirdine, efavirenz (DMP-266), emivirine (I-EBU), and nevirapine (BI-RG-587). The tritherapies used as a basic effective treatment of AIDS associate two NRTIs and one NNRTI. Functionally, mediates, with Gag polyprotein, the essential events in virion assembly, including binding the plasma membrane, making the protein-protein interactions necessary to create spherical particles, recruiting the viral Env proteins, and packaging the genomic RNA via direct interactions with the RNA packaging sequence (Psi). Gag-Pol polyprotein may regulate its own translation, by the binding genomic RNA in the 5'-UTR. At low concentration, the polyprotein would promote translation, whereas at high concentration, the polyprotein would encapsidate genomic RNA and then shut off translation. Targets the polyprotein to the plasma membrane via a multipartite membrane-binding signal, that includes its myristoylated N-terminus. Matrix protein is part of the pre-integration complex. Implicated in the release from host cell mediated by Vpu. Binds to RNA. In terms of biological role, forms the conical core that encapsulates the genomic RNA-nucleocapsid complex in the virion. Most core are conical, with only 7% tubular. The core is constituted by capsid protein hexamer subunits. The core is disassembled soon after virion entry. Host restriction factors such as TRIM5-alpha or TRIMCyp bind retroviral capsids and cause premature capsid disassembly, leading to blocks in reverse transcription. Capsid restriction by TRIM5 is one of the factors which restricts HIV-1 to the human species. Host PIN1 apparently facilitates the virion uncoating. On the other hand, interactions with PDZD8 or CYPA stabilize the capsid. Its function is as follows. Encapsulates and protects viral dimeric unspliced genomic RNA (gRNA). Binds these RNAs through its zinc fingers. Acts as a nucleic acid chaperone which is involved in rearangement of nucleic acid secondary structure during gRNA retrotranscription. Also facilitates template switch leading to recombination. As part of the polyprotein, participates in gRNA dimerization, packaging, tRNA incorporation and virion assembly. Functionally, aspartyl protease that mediates proteolytic cleavages of Gag and Gag-Pol polyproteins during or shortly after the release of the virion from the plasma membrane. Cleavages take place as an ordered, step-wise cascade to yield mature proteins. This process is called maturation. Displays maximal activity during the budding process just prior to particle release from the cell. Also cleaves Nef and Vif, probably concomitantly with viral structural proteins on maturation of virus particles. Hydrolyzes host EIF4GI and PABP1 in order to shut off the capped cellular mRNA translation. The resulting inhibition of cellular protein synthesis serves to ensure maximal viral gene expression and to evade host immune response. Multifunctional enzyme that converts the viral RNA genome into dsDNA in the cytoplasm, shortly after virus entry into the cell. This enzyme displays a DNA polymerase activity that can copy either DNA or RNA templates, and a ribonuclease H (RNase H) activity that cleaves the RNA strand of RNA-DNA heteroduplexes in a partially processive 3' to 5' endonucleasic mode. Conversion of viral genomic RNA into dsDNA requires many steps. A tRNA(3)-Lys binds to the primer-binding site (PBS) situated at the 5'-end of the viral RNA. RT uses the 3' end of the tRNA primer to perform a short round of RNA-dependent minus-strand DNA synthesis. The reading proceeds through the U5 region and ends after the repeated (R) region which is present at both ends of viral RNA. The portion of the RNA-DNA heteroduplex is digested by the RNase H, resulting in a ssDNA product attached to the tRNA primer. This ssDNA/tRNA hybridizes with the identical R region situated at the 3' end of viral RNA. This template exchange, known as minus-strand DNA strong stop transfer, can be either intra- or intermolecular. RT uses the 3' end of this newly synthesized short ssDNA to perform the RNA-dependent minus-strand DNA synthesis of the whole template. RNase H digests the RNA template except for two polypurine tracts (PPTs) situated at the 5'-end and near the center of the genome. It is not clear if both polymerase and RNase H activities are simultaneous. RNase H probably can proceed both in a polymerase-dependent (RNA cut into small fragments by the same RT performing DNA synthesis) and a polymerase-independent mode (cleavage of remaining RNA fragments by free RTs). Secondly, RT performs DNA-directed plus-strand DNA synthesis using the PPTs that have not been removed by RNase H as primers. PPTs and tRNA primers are then removed by RNase H. The 3' and 5' ssDNA PBS regions hybridize to form a circular dsDNA intermediate. Strand displacement synthesis by RT to the PBS and PPT ends produces a blunt ended, linear dsDNA copy of the viral genome that includes long terminal repeats (LTRs) at both ends. In terms of biological role, catalyzes viral DNA integration into the host chromosome, by performing a series of DNA cutting and joining reactions. This enzyme activity takes place after virion entry into a cell and reverse transcription of the RNA genome in dsDNA. The first step in the integration process is 3' processing. This step requires a complex comprising the viral genome, matrix protein, Vpr and integrase. This complex is called the pre-integration complex (PIC). The integrase protein removes 2 nucleotides from each 3' end of the viral DNA, leaving recessed CA OH's at the 3' ends. In the second step, the PIC enters cell nucleus. This process is mediated through integrase and Vpr proteins, and allows the virus to infect a non dividing cell. This ability to enter the nucleus is specific of lentiviruses, other retroviruses cannot and rely on cell division to access cell chromosomes. In the third step, termed strand transfer, the integrase protein joins the previously processed 3' ends to the 5' ends of strands of target cellular DNA at the site of integration. The 5'-ends are produced by integrase-catalyzed staggered cuts, 5 bp apart. A Y-shaped, gapped, recombination intermediate results, with the 5'-ends of the viral DNA strands and the 3' ends of target DNA strands remaining unjoined, flanking a gap of 5 bp. The last step is viral DNA integration into host chromosome. This involves host DNA repair synthesis in which the 5 bp gaps between the unjoined strands are filled in and then ligated. Since this process occurs at both cuts flanking the HIV genome, a 5 bp duplication of host DNA is produced at the ends of HIV-1 integration. Alternatively, Integrase may catalyze the excision of viral DNA just after strand transfer, this is termed disintegration. The protein is Gag-Pol polyprotein (gag-pol) of Homo sapiens (Human).